The chain runs to 215 residues: UPF0502 protein YceH (215 aa).

Position 80 is an N6-acetyllysine (Lys80).

Belongs to the UPF0502 family.

The protein is UPF0502 protein YceH of Escherichia coli O127:H6 (strain E2348/69 / EPEC).